The chain runs to 344 residues: tRNA N6-adenosine threonylcarbamoyltransferase (344 aa).

Residues H112 and H116 each coordinate Fe cation. Residues 135–139, D168, G181, and N271 each bind substrate; that span reads LVSGG. D299 is a binding site for Fe cation.

Belongs to the KAE1 / TsaD family. The cofactor is Fe(2+).

It localises to the cytoplasm. It carries out the reaction L-threonylcarbamoyladenylate + adenosine(37) in tRNA = N(6)-L-threonylcarbamoyladenosine(37) in tRNA + AMP + H(+). Required for the formation of a threonylcarbamoyl group on adenosine at position 37 (t(6)A37) in tRNAs that read codons beginning with adenine. Is involved in the transfer of the threonylcarbamoyl moiety of threonylcarbamoyl-AMP (TC-AMP) to the N6 group of A37, together with TsaE and TsaB. TsaD likely plays a direct catalytic role in this reaction. This is tRNA N6-adenosine threonylcarbamoyltransferase from Sphingopyxis alaskensis (strain DSM 13593 / LMG 18877 / RB2256) (Sphingomonas alaskensis).